Consider the following 118-residue polypeptide: D-dopachrome decarboxylase (118 aa).

The residue at position 2 (P2) is an N-acetylproline. N6-acetyllysine is present on K33.

It belongs to the MIF family. Homotrimer.

The protein localises to the cytoplasm. The catalysed reaction is D-dopachrome + H(+) = 5,6-dihydroxyindole + CO2. Tautomerization of D-dopachrome with decarboxylation to give 5,6-dihydroxyindole (DHI). The protein is D-dopachrome decarboxylase (DDT) of Bos taurus (Bovine).